The sequence spans 616 residues: Dihydroxy-acid dehydratase (616 aa).

D81 contributes to the Mg(2+) binding site. Position 122 (C122) interacts with [2Fe-2S] cluster. Positions 123 and 124 each coordinate Mg(2+). N6-carboxylysine is present on K124. Residue C195 coordinates [2Fe-2S] cluster. E491 is a binding site for Mg(2+). Catalysis depends on S517, which acts as the Proton acceptor.

Belongs to the IlvD/Edd family. Homodimer. [2Fe-2S] cluster serves as cofactor. It depends on Mg(2+) as a cofactor.

The catalysed reaction is (2R)-2,3-dihydroxy-3-methylbutanoate = 3-methyl-2-oxobutanoate + H2O. It catalyses the reaction (2R,3R)-2,3-dihydroxy-3-methylpentanoate = (S)-3-methyl-2-oxopentanoate + H2O. The protein operates within amino-acid biosynthesis; L-isoleucine biosynthesis; L-isoleucine from 2-oxobutanoate: step 3/4. It functions in the pathway amino-acid biosynthesis; L-valine biosynthesis; L-valine from pyruvate: step 3/4. Functionally, functions in the biosynthesis of branched-chain amino acids. Catalyzes the dehydration of (2R,3R)-2,3-dihydroxy-3-methylpentanoate (2,3-dihydroxy-3-methylvalerate) into 2-oxo-3-methylpentanoate (2-oxo-3-methylvalerate) and of (2R)-2,3-dihydroxy-3-methylbutanoate (2,3-dihydroxyisovalerate) into 2-oxo-3-methylbutanoate (2-oxoisovalerate), the penultimate precursor to L-isoleucine and L-valine, respectively. This is Dihydroxy-acid dehydratase from Tolumonas auensis (strain DSM 9187 / NBRC 110442 / TA 4).